The primary structure comprises 132 residues: Fatty acid-binding protein, intestinal (132 aa).

N-acetylalanine is present on A2. Residues W83 and R107 each contribute to the hexadecanoate site. 2 residues coordinate tetradecanoate: W83 and R107.

It belongs to the calycin superfamily. Fatty-acid binding protein (FABP) family.

Its subcellular location is the cytoplasm. FABPs are thought to play a role in the intracellular transport of long-chain fatty acids and their acyl-CoA esters. FABP2 is probably involved in triglyceride-rich lipoprotein synthesis. Binds saturated long-chain fatty acids with a high affinity, but binds with a lower affinity to unsaturated long-chain fatty acids. FABP2 may also help maintain energy homeostasis by functioning as a lipid sensor. The protein is Fatty acid-binding protein, intestinal (FABP2) of Sus scrofa (Pig).